The following is a 143-amino-acid chain: 5-hydroxymethyl-dUMP N-hydrolase (143 aa).

Glycine 7, isoleucine 9, arginine 10, glycine 11, serine 77, glycine 79, glutamate 83, and serine 107 together coordinate 5-hydroxymethyl-dUMP.

Belongs to the 2'-deoxynucleoside 5'-phosphate N-hydrolase 1 family. In terms of assembly, monomer and homodimer.

Its subcellular location is the cytoplasm. The protein localises to the nucleus. The catalysed reaction is 5-hydroxymethyl-dUMP + H2O = 5-hydroxymethyluracil + 2-deoxy-D-ribose 5-phosphate. Its function is as follows. Part of a nucleotide salvage pathway that eliminates epigenetically modified 5-hydroxymethyl-dCMP (hmdCMP) in a two-step process entailing deamination to cytotoxic 5-hydroxymethyl-dUMP (hmdUMP), followed by its hydrolysis into 5-hydroxymethyluracil (hmU) and 2-deoxy-D-ribose 5-phosphate (deoxyribosephosphate). The sequence is that of 5-hydroxymethyl-dUMP N-hydrolase (dnph1) from Danio rerio (Zebrafish).